The chain runs to 325 residues: Probable cell division protein WhiA (325 aa).

The H-T-H motif DNA-binding region spans 280-313 (SLKELGNMLEKPLGKSGVNHRLRKIDKIAEELRK).

The protein belongs to the WhiA family.

Involved in cell division and chromosome segregation. This chain is Probable cell division protein WhiA, found in Caldicellulosiruptor bescii (strain ATCC BAA-1888 / DSM 6725 / KCTC 15123 / Z-1320) (Anaerocellum thermophilum).